Consider the following 354-residue polypeptide: GRAM domain-containing protein 2A (354 aa).

The segment covering 1–29 has biased composition (polar residues); sequence MTALSRSEATEEGGNQQMHRKTASLNSPV. The disordered stretch occupies residues 1-46; the sequence is MTALSRSEATEEGGNQQMHRKTASLNSPVSCKEKPDRVEEPPDYSL. Basic and acidic residues predominate over residues 31–40; sequence CKEKPDRVEE. The region spanning 72-139 is the GRAM domain; it reads QQYHKLFKDV…VSVQMIKKHK (68 aa). A helical transmembrane segment spans residues 312–332; the sequence is LLKVFFVLICFLVMSSSYLAF.

It is found in the endoplasmic reticulum membrane. It localises to the cell membrane. Functionally, participates in the organization of endoplasmic reticulum-plasma membrane contact sites (EPCS) with pleiotropic functions including STIM1 recruitment and calcium homeostasis. Constitutive tether that co-localize with ESYT2/3 tethers at endoplasmic reticulum-plasma membrane contact sites in a phosphatidylinositol lipid-dependent manner. Pre-marks the subset of phosphtidylinositol 4,5-biphosphate (PI(4,5)P2)-enriched EPCS destined for the store operated calcium entry pathway (SOCE). In Homo sapiens (Human), this protein is GRAM domain-containing protein 2A.